We begin with the raw amino-acid sequence, 122 residues long: Large ribosomal subunit protein uL14 (122 aa).

The protein belongs to the universal ribosomal protein uL14 family. Part of the 50S ribosomal subunit. Forms a cluster with proteins L3 and L19. In the 70S ribosome, L14 and L19 interact and together make contacts with the 16S rRNA in bridges B5 and B8.

Functionally, binds to 23S rRNA. Forms part of two intersubunit bridges in the 70S ribosome. The polypeptide is Large ribosomal subunit protein uL14 (Staphylococcus haemolyticus (strain JCSC1435)).